The sequence spans 277 residues: MENNKTSVDSKSIKTLETKILHGSKSMDSGISLDVSYKMDYPEMGLCIIINNKNFDKNTGMACRSGTDVDAANLRETFTNLKYEVRNKNDLTREEILELMHSVSKEDHSKRSSFICVLLSHGEEGKIFGTNGPVDLKKLTSFFRGDCCRTLTGKPKLFIIQACRGTELDCGIETDSGTEDDMACQKIPVEADFLYAYSTAPGYYSWRNSKDGSWFIQSLCAALKQYVHKLELMHILTRVNRKVAVEFESFSTDSTFHAKKQIPCIVSMLTKELYFYH.

Met-1 carries the N-acetylmethionine modification. Propeptides lie at residues 1 to 9 (MENNKTSVD) and 10 to 28 (SKSI…KSMD). An N6-acetyllysine modification is found at Lys-11. The residue at position 26 (Ser-26) is a Phosphoserine. Catalysis depends on residues His-121 and Cys-163. Position 163 is an S-nitrosocysteine; in inhibited form (Cys-163).

The protein belongs to the peptidase C14A family. Heterotetramer that consists of two anti-parallel arranged heterodimers, each one formed by a 17 kDa (p17) and a 12 kDa (p12) subunit. Interacts with BIRC6/bruce. As to quaternary structure, (Microbial infection) Subunit p17 interacts with African swine fever virus (ASFV) inhibitor of apoptosis protein. In terms of processing, cleavage by granzyme B, caspase-6, caspase-8 and caspase-10 generates the two active subunits. Additional processing of the propeptides is likely due to the autocatalytic activity of the activated protease. Active heterodimers between the small subunit of caspase-7 protease and the large subunit of caspase-3 also occur and vice versa. S-nitrosylated on its catalytic site cysteine in unstimulated cell lines and denitrosylated upon activation of the Fas apoptotic pathway, associated with an increase in intracellular caspase activity. Fas therefore activates caspase-3 not only by inducing the cleavage of the caspase zymogen to its active subunits, but also by stimulating the denitrosylation of its active site thiol. Post-translationally, ubiquitinated by BIRC6; this activity is inhibited by DIABLO/SMAC.

It is found in the cytoplasm. The enzyme catalyses Strict requirement for an Asp residue at positions P1 and P4. It has a preferred cleavage sequence of Asp-Xaa-Xaa-Asp-|- with a hydrophobic amino-acid residue at P2 and a hydrophilic amino-acid residue at P3, although Val or Ala are also accepted at this position.. Inhibited by BIRC6; following inhibition of BIRC6-caspase binding by DIABLO/SMAC, BIRC6 is subjected to caspase cleavage, leading to an increase in active caspases. Functionally, involved in the activation cascade of caspases responsible for apoptosis execution. At the onset of apoptosis, it proteolytically cleaves poly(ADP-ribose) polymerase PARP1 at a '216-Asp-|-Gly-217' bond. Cleaves and activates sterol regulatory element binding proteins (SREBPs) between the basic helix-loop-helix leucine zipper domain and the membrane attachment domain. Cleaves and activates caspase-6, -7 and -9 (CASP6, CASP7 and CASP9, respectively). Cleaves and inactivates interleukin-18 (IL18). Triggers cell adhesion in sympathetic neurons through RET cleavage. Cleaves IL-1 beta between an Asp and an Ala, releasing the mature cytokine which is involved in a variety of inflammatory processes. Cleaves and inhibits serine/threonine-protein kinase AKT1 in response to oxidative stress. Acts as an inhibitor of type I interferon production during virus-induced apoptosis by mediating cleavage of antiviral proteins CGAS, IRF3 and MAVS, thereby preventing cytokine overproduction. Also involved in pyroptosis by mediating cleavage and activation of gasdermin-E (GSDME). Cleaves XRCC4 and phospholipid scramblase proteins XKR4, XKR8 and XKR9, leading to promote phosphatidylserine exposure on apoptotic cell surface. Cleaves BIRC6 following inhibition of BIRC6-caspase binding by DIABLO/SMAC. The polypeptide is Caspase-3 (CASP3) (Sus scrofa (Pig)).